The chain runs to 329 residues: tRNA(Ile)-lysidine synthase (329 aa).

37 to 42 (SGGSDS) provides a ligand contact to ATP.

The protein belongs to the tRNA(Ile)-lysidine synthase family.

It is found in the cytoplasm. It carries out the reaction cytidine(34) in tRNA(Ile2) + L-lysine + ATP = lysidine(34) in tRNA(Ile2) + AMP + diphosphate + H(+). Ligates lysine onto the cytidine present at position 34 of the AUA codon-specific tRNA(Ile) that contains the anticodon CAU, in an ATP-dependent manner. Cytidine is converted to lysidine, thus changing the amino acid specificity of the tRNA from methionine to isoleucine. The chain is tRNA(Ile)-lysidine synthase from Zymomonas mobilis subsp. mobilis (strain ATCC 31821 / ZM4 / CP4).